We begin with the raw amino-acid sequence, 166 residues long: Regulatory protein RecX (166 aa).

The protein belongs to the RecX family.

The protein localises to the cytoplasm. Functionally, modulates RecA activity. This is Regulatory protein RecX from Escherichia fergusonii (strain ATCC 35469 / DSM 13698 / CCUG 18766 / IAM 14443 / JCM 21226 / LMG 7866 / NBRC 102419 / NCTC 12128 / CDC 0568-73).